The following is a 231-amino-acid chain: Putative cobalt transport protein CbiM 2 (231 aa).

6 helical membrane-spanning segments follow: residues L8 to I28, V41 to P61, L75 to F95, L108 to V128, V136 to V156, and I176 to I196.

The protein belongs to the CbiM family. As to quaternary structure, forms an energy-coupling factor (ECF) transporter complex composed of an ATP-binding protein (A component, CbiO), a transmembrane protein (T component, CbiQ) and 2 possible substrate-capture proteins (S components, CbiM and CbiN) of unknown stoichimetry.

Its subcellular location is the cell membrane. The protein operates within cofactor biosynthesis; adenosylcobalamin biosynthesis. In terms of biological role, part of the energy-coupling factor (ECF) transporter complex CbiMNOQ involved in cobalt import. The sequence is that of Putative cobalt transport protein CbiM 2 from Methanocorpusculum labreanum (strain ATCC 43576 / DSM 4855 / Z).